The primary structure comprises 331 residues: Ferredoxin--NADP reductase 2 (331 aa).

Residues Glu-37, Gln-45, Tyr-50, Val-90, Phe-124, Asp-286, and Thr-327 each contribute to the FAD site.

Belongs to the ferredoxin--NADP reductase type 2 family. Homodimer. It depends on FAD as a cofactor.

It catalyses the reaction 2 reduced [2Fe-2S]-[ferredoxin] + NADP(+) + H(+) = 2 oxidized [2Fe-2S]-[ferredoxin] + NADPH. This chain is Ferredoxin--NADP reductase 2, found in Listeria welshimeri serovar 6b (strain ATCC 35897 / DSM 20650 / CCUG 15529 / CIP 8149 / NCTC 11857 / SLCC 5334 / V8).